Consider the following 663-residue polypeptide: Protein-arginine deiminase type-4 (663 aa).

Ca(2+) contacts are provided by N153, D155, D157, D165, D168, E170, D176, and D179. R205, R212, and R218 each carry citrulline. Residue Q349 coordinates Ca(2+). Residue D350 is part of the active site. Ca(2+) contacts are provided by E351, E353, D369, and S370. Citrulline is present on R372. N373 serves as a coordination point for Ca(2+). A citrulline mark is found at R374 and R383. Residue R374 participates in substrate binding. The Ca(2+) site is built by D388, F407, L410, and E411. Residues H471 and D473 contribute to the active site. Residue R639 coordinates substrate. The active site involves C645.

This sequence belongs to the protein arginine deiminase family. Requires Ca(2+) as cofactor. Post-translationally, autocitrullination at Arg-372 and Arg-374 inactivates the enzyme. In terms of tissue distribution, expressed in eosinophils and neutrophils, not expressed in peripheral monocytes or lymphocytes.

The protein localises to the cytoplasm. The protein resides in the nucleus. Its subcellular location is the cytoplasmic granule. The enzyme catalyses L-arginyl-[protein] + H2O = L-citrullyl-[protein] + NH4(+). With respect to regulation, strongly Inhibited by F-amidine and N-alpha-benzoyl-N5-(2-chloro-1-iminoethyl)-L-ornithine amide (Cl-amidine). These inhibitors are however not specific to PADI4 and also inhibit other members of the family. Incorporation of a carboxylate ortho to the backbone amide of Cl-amidine results in inhibitors with increased specificity for PADI4: N-alpha-(2-carboxyl)benzoyl-N(5)-(2-fluoro-1-iminoethyl)-L-ornithine amide (o-F-amidine) and N-alpha-(2-carboxyl)benzoyl-N(5)-(2-chloro-1-iminoethyl)-L-ornithine amide (o-Cl-amidine). Strongly and specifically inhibited by Thr-Asp-F-amidine (TDFA); other members of the family are not inhibited. Catalyzes the citrullination/deimination of arginine residues of proteins such as histones, thereby playing a key role in histone code and regulation of stem cell maintenance. Citrullinates histone H1 at 'Arg-54' (to form H1R54ci), histone H3 at 'Arg-2', 'Arg-8', 'Arg-17' and/or 'Arg-26' (to form H3R2ci, H3R8ci, H3R17ci, H3R26ci, respectively) and histone H4 at 'Arg-3' (to form H4R3ci). Acts as a key regulator of stem cell maintenance by mediating citrullination of histone H1: citrullination of 'Arg-54' of histone H1 (H1R54ci) results in H1 displacement from chromatin and global chromatin decondensation, thereby promoting pluripotency and stem cell maintenance. Promotes profound chromatin decondensation during the innate immune response to infection in neutrophils by mediating formation of H1R54ci. Required for the formation of neutrophil extracellular traps (NETs); NETs are mainly composed of DNA fibers and are released by neutrophils to bind pathogens during inflammation. Citrullination of histone H3 prevents their methylation by CARM1 and HRMT1L2/PRMT1 and represses transcription. Citrullinates EP300/P300 at 'Arg-2142', which favors its interaction with NCOA2/GRIP1. This chain is Protein-arginine deiminase type-4 (PADI4), found in Homo sapiens (Human).